Consider the following 624-residue polypeptide: Leucine-rich repeat and IQ domain-containing protein 3 (624 aa).

LRR repeat units lie at residues 51-72, 73-94, and 98-119; these read SLRVCIFSNNFITDIHPLQSCI, KLIKLDLHGNQIKSLPNTKFWN, and NLKLLYLHDNGFAKLKNICVLS. The region spanning 132-179 is the LRRCT domain; sequence CPVSLKKGYRHVLVNSIWPLKALDHHVISDEEIIQNWHLPERFKACNH. The IQ domain maps to 215 to 244; the sequence is HNSPVLIVQRWIRGFLVRKNLSPVFFHKKK. The stretch at 553–614 forms a coiled coil; sequence KQKLKAEKYR…TKVAIVKTNL (62 aa).

In Homo sapiens (Human), this protein is Leucine-rich repeat and IQ domain-containing protein 3 (LRRIQ3).